A 230-amino-acid chain; its full sequence is Phosphoribosylaminoimidazole-succinocarboxamide synthase (230 aa).

Belongs to the SAICAR synthetase family.

It carries out the reaction 5-amino-1-(5-phospho-D-ribosyl)imidazole-4-carboxylate + L-aspartate + ATP = (2S)-2-[5-amino-1-(5-phospho-beta-D-ribosyl)imidazole-4-carboxamido]succinate + ADP + phosphate + 2 H(+). Its pathway is purine metabolism; IMP biosynthesis via de novo pathway; 5-amino-1-(5-phospho-D-ribosyl)imidazole-4-carboxamide from 5-amino-1-(5-phospho-D-ribosyl)imidazole-4-carboxylate: step 1/2. The protein is Phosphoribosylaminoimidazole-succinocarboxamide synthase (purC) of Thermotoga maritima (strain ATCC 43589 / DSM 3109 / JCM 10099 / NBRC 100826 / MSB8).